Here is a 136-residue protein sequence, read N- to C-terminus: Small ribosomal subunit protein eS8 (136 aa).

A disordered region spans residues 1–23 (MGVYHGNDLKKPTGGKKRPHQKV). A compositionally biased stretch (basic residues) spans 13–23 (TGGKKRPHQKV).

The protein belongs to the eukaryotic ribosomal protein eS8 family. As to quaternary structure, part of the 30S ribosomal subunit.

The sequence is that of Small ribosomal subunit protein eS8 from Hyperthermus butylicus (strain DSM 5456 / JCM 9403 / PLM1-5).